The primary structure comprises 128 residues: Disintegrin ocellatusin (128 aa).

A signal peptide spans 1–20 (MIPVLLVTICLAVFPFQGSS). Positions 21-65 (IILESGNINDYEIVYPKKVAVLPTGAMNSAHPCYDPVTCQPKEKE) are excised as a propeptide. The Disintegrin domain maps to 26-112 (GNINDYEIVY…DCPRNPYKGE (87 aa)). 5 disulfide bridges follow: Cys-53–Cys-59, Cys-67–Cys-76, Cys-72–Cys-97, Cys-73–Cys-102, and Cys-85–Cys-104. The short motif at 89–91 (RGD) is the Cell attachment site element. A propeptide spanning residues 116-128 (MEWPAPAKGSVLM) is cleaved from the precursor.

In terms of assembly, monomer. As to expression, expressed by the venom gland.

The protein resides in the secreted. Functionally, the disintegrin ocellatusin-10c1 is a poor inhibitor of platelet aggregation. The disintegrin inhibits the adhesion of cells expressing the RGD-dependent integrin alpha-5/beta-1 (ITGA5/ITGB1) to immobilized fibronectin. Inhibition on alpha-2b/beta-3 (ITGA2B/ITGB3) is low, and there is no inhibition on alpha-1/beta-1 (ITGA1/ITGB1), alpha-2/beta-1 (ITGA2/ITGB1) and alpha-6/beta-1 (ITGA6/ITGB1). Its function is as follows. The short monomeric disintegrin ocellatusin inhibits ADP-induced platelet aggregation (IC(50)=168 nM). Inhibits alpha-5/beta-1 (ITGA5/ITGB1) integrin and induces the expression of a ligand-induced binding site epitope on beta-1 integrin subunit. Has a direct chemotactic stimulus on human neutrophils in vitro. The polypeptide is Disintegrin ocellatusin (Echis ocellatus (Ocellated saw-scaled viper)).